A 243-amino-acid chain; its full sequence is uncharacterized protein (243 aa).

Belongs to the mycobacterial PPE family.

The protein localises to the cell membrane. This is an uncharacterized protein from Mycobacterium tuberculosis (strain CDC 1551 / Oshkosh).